A 364-amino-acid polypeptide reads, in one-letter code: Dual-specificity RNA methyltransferase RlmN (364 aa).

Catalysis depends on glutamate 91, which acts as the Proton acceptor. The region spanning glutamate 97–aspartate 333 is the Radical SAM core domain. An intrachain disulfide couples cysteine 104 to cysteine 338. The [4Fe-4S] cluster site is built by cysteine 111, cysteine 115, and cysteine 118. S-adenosyl-L-methionine-binding positions include glycine 164–glutamate 165, serine 196, serine 218–histidine 220, and asparagine 295. Cysteine 338 (S-methylcysteine intermediate) is an active-site residue.

It belongs to the radical SAM superfamily. RlmN family. [4Fe-4S] cluster is required as a cofactor.

Its subcellular location is the cytoplasm. The enzyme catalyses adenosine(2503) in 23S rRNA + 2 reduced [2Fe-2S]-[ferredoxin] + 2 S-adenosyl-L-methionine = 2-methyladenosine(2503) in 23S rRNA + 5'-deoxyadenosine + L-methionine + 2 oxidized [2Fe-2S]-[ferredoxin] + S-adenosyl-L-homocysteine. It carries out the reaction adenosine(37) in tRNA + 2 reduced [2Fe-2S]-[ferredoxin] + 2 S-adenosyl-L-methionine = 2-methyladenosine(37) in tRNA + 5'-deoxyadenosine + L-methionine + 2 oxidized [2Fe-2S]-[ferredoxin] + S-adenosyl-L-homocysteine. In terms of biological role, specifically methylates position 2 of adenine 2503 in 23S rRNA and position 2 of adenine 37 in tRNAs. m2A2503 modification seems to play a crucial role in the proofreading step occurring at the peptidyl transferase center and thus would serve to optimize ribosomal fidelity. This is Dual-specificity RNA methyltransferase RlmN from Neisseria gonorrhoeae (strain ATCC 700825 / FA 1090).